The primary structure comprises 507 residues: tRNA (guanine(10)-N(2))-methyltransferase TRMT11 (507 aa).

The span at 459–475 (EKTKKKEQKKKSVENHL) shows a compositional bias: basic and acidic residues. Residues 459–507 (EKTKKKEQKKKSVENHLKSKNNNDVINNNSNDTNSNNNCNNENNIENQK) are disordered. A compositionally biased stretch (low complexity) spans 480-507 (NNDVINNNSNDTNSNNNCNNENNIENQK).

The protein belongs to the class I-like SAM-binding methyltransferase superfamily. TRM11 methyltransferase family. In terms of assembly, part of the heterodimeric TRMT11-TRM112 methyltransferase complex; this complex forms an active tRNA methyltransferase, where TRMT112 acts as an activator of the catalytic subunit TRMT11.

Its subcellular location is the cytoplasm. It carries out the reaction guanosine(10) in tRNA + S-adenosyl-L-methionine = N(2)-methylguanosine(10) in tRNA + S-adenosyl-L-homocysteine + H(+). Its function is as follows. Catalytic subunit of the TRMT11-TRM112 methyltransferase complex, that specifically mediates the S-adenosyl-L-methionine-dependent N(2)-methylation of guanosine nucleotide at position 10 (m2G10) in tRNAs. This is one of the major tRNA (guanine-N(2))-methyltransferases. The sequence is that of tRNA (guanine(10)-N(2))-methyltransferase TRMT11 (trmt11) from Dictyostelium discoideum (Social amoeba).